Here is a 224-residue protein sequence, read N- to C-terminus: Serum amyloid P-component (224 aa).

The first 19 residues, 1 to 19 (MERLLLWVSVLASLPEAFA), serve as a signal peptide directing secretion. A Pentraxin (PTX) domain is found at 24–224 (TGKVFVFPRE…YVVIKPRVWS (201 aa)). The N-linked (GlcNAc...) asparagine glycan is linked to asparagine 51. The cysteines at positions 55 and 114 are disulfide-linked. Positions 77, 78, 155, 156, 157, and 167 each coordinate Ca(2+).

The protein belongs to the pentraxin family. In terms of assembly, homopentamer. Pentraxin (or pentaxin) have a discoid arrangement of 5 non-covalently bound subunits. Ca(2+) is required as a cofactor.

It is found in the secreted. This is Serum amyloid P-component (APCS) from Sus scrofa (Pig).